A 260-amino-acid chain; its full sequence is Pyridoxine 5'-phosphate synthase (260 aa).

Residues Asn7 and Arg18 each contribute to the 3-amino-2-oxopropyl phosphate site. His43 acts as the Proton acceptor in catalysis. Residues Arg45 and His50 each contribute to the 1-deoxy-D-xylulose 5-phosphate site. Glu83 (proton acceptor) is an active-site residue. 1-deoxy-D-xylulose 5-phosphate is bound at residue Thr113. The active-site Proton donor is the His208. 3-amino-2-oxopropyl phosphate is bound by residues Asp209 and 230–231 (GH).

The protein belongs to the PNP synthase family. In terms of assembly, homooctamer; tetramer of dimers.

The protein localises to the cytoplasm. It carries out the reaction 3-amino-2-oxopropyl phosphate + 1-deoxy-D-xylulose 5-phosphate = pyridoxine 5'-phosphate + phosphate + 2 H2O + H(+). It participates in cofactor biosynthesis; pyridoxine 5'-phosphate biosynthesis; pyridoxine 5'-phosphate from D-erythrose 4-phosphate: step 5/5. Its function is as follows. Catalyzes the complicated ring closure reaction between the two acyclic compounds 1-deoxy-D-xylulose-5-phosphate (DXP) and 3-amino-2-oxopropyl phosphate (1-amino-acetone-3-phosphate or AAP) to form pyridoxine 5'-phosphate (PNP) and inorganic phosphate. The sequence is that of Pyridoxine 5'-phosphate synthase from Leptospira biflexa serovar Patoc (strain Patoc 1 / Ames).